Consider the following 92-residue polypeptide: Small ribosomal subunit protein bS20 (92 aa).

Positions 1–25 (MANSAQARKRARQAAKANSHNSALR) are disordered.

It belongs to the bacterial ribosomal protein bS20 family.

Functionally, binds directly to 16S ribosomal RNA. The sequence is that of Small ribosomal subunit protein bS20 from Paraburkholderia phytofirmans (strain DSM 17436 / LMG 22146 / PsJN) (Burkholderia phytofirmans).